We begin with the raw amino-acid sequence, 246 residues long: Orotidine 5'-phosphate decarboxylase (246 aa).

Substrate-binding positions include Asp-22, Lys-44, 71-80 (DLKYHDIPHT), Thr-130, Arg-191, Gln-201, Gly-221, and Arg-222. Lys-73 serves as the catalytic Proton donor.

Belongs to the OMP decarboxylase family. Type 1 subfamily. In terms of assembly, homodimer.

It catalyses the reaction orotidine 5'-phosphate + H(+) = UMP + CO2. It functions in the pathway pyrimidine metabolism; UMP biosynthesis via de novo pathway; UMP from orotate: step 2/2. Functionally, catalyzes the decarboxylation of orotidine 5'-monophosphate (OMP) to uridine 5'-monophosphate (UMP). The chain is Orotidine 5'-phosphate decarboxylase from Neisseria meningitidis serogroup B (strain ATCC BAA-335 / MC58).